Here is an 85-residue protein sequence, read N- to C-terminus: Phosphocarrier protein HPr (85 aa).

In terms of domain architecture, HPr spans 1–85 (MFQRDIKITT…DLAKFLTTLK (85 aa)). The Pros-phosphohistidine intermediate role is filled by histidine 15.

The protein belongs to the HPr family.

It localises to the cytoplasm. Functionally, general (non sugar-specific) component of the phosphoenolpyruvate-dependent sugar phosphotransferase system (sugar PTS). This major carbohydrate active-transport system catalyzes the phosphorylation of incoming sugar substrates concomitantly with their translocation across the cell membrane. The phosphoryl group from phosphoenolpyruvate (PEP) is transferred to the phosphoryl carrier protein HPr by enzyme I. Phospho-HPr then transfers it to the PTS EIIA domain. This Buchnera aphidicola subsp. Baizongia pistaciae (strain Bp) protein is Phosphocarrier protein HPr (ptsH).